Consider the following 359-residue polypeptide: Probable dual-specificity RNA methyltransferase RlmN (359 aa).

The active-site Proton acceptor is Glu-100. A Radical SAM core domain is found at 106–340; the sequence is TDKRLTVCVS…VSVRASRGRD (235 aa). A disulfide bond links Cys-113 and Cys-345. [4Fe-4S] cluster is bound by residues Cys-120, Cys-124, and Cys-127. S-adenosyl-L-methionine is bound by residues 167–168, Ser-197, 226–228, and Asn-302; these read GE and SLH. The S-methylcysteine intermediate role is filled by Cys-345.

Belongs to the radical SAM superfamily. RlmN family. The cofactor is [4Fe-4S] cluster.

It localises to the cytoplasm. It catalyses the reaction adenosine(2503) in 23S rRNA + 2 reduced [2Fe-2S]-[ferredoxin] + 2 S-adenosyl-L-methionine = 2-methyladenosine(2503) in 23S rRNA + 5'-deoxyadenosine + L-methionine + 2 oxidized [2Fe-2S]-[ferredoxin] + S-adenosyl-L-homocysteine. The enzyme catalyses adenosine(37) in tRNA + 2 reduced [2Fe-2S]-[ferredoxin] + 2 S-adenosyl-L-methionine = 2-methyladenosine(37) in tRNA + 5'-deoxyadenosine + L-methionine + 2 oxidized [2Fe-2S]-[ferredoxin] + S-adenosyl-L-homocysteine. Specifically methylates position 2 of adenine 2503 in 23S rRNA and position 2 of adenine 37 in tRNAs. This chain is Probable dual-specificity RNA methyltransferase RlmN, found in Prochlorococcus marinus (strain NATL1A).